A 479-amino-acid chain; its full sequence is Glycogen synthase (479 aa).

Lys15 is a binding site for ADP-alpha-D-glucose.

Belongs to the glycosyltransferase 1 family. Bacterial/plant glycogen synthase subfamily.

It carries out the reaction [(1-&gt;4)-alpha-D-glucosyl](n) + ADP-alpha-D-glucose = [(1-&gt;4)-alpha-D-glucosyl](n+1) + ADP + H(+). It functions in the pathway glycan biosynthesis; glycogen biosynthesis. Synthesizes alpha-1,4-glucan chains using ADP-glucose. The chain is Glycogen synthase from Nostoc punctiforme (strain ATCC 29133 / PCC 73102).